The following is a 378-amino-acid chain: Alpha-galactosidase (378 aa).

Residues 1-15 (MVKSPGTEDYTRRSL) form the signal peptide. 2 cysteine pairs are disulfide-bonded: C36-C68 and C116-C147. D145 functions as the Nucleophile in the catalytic mechanism. 178–182 (EWGEE) serves as a coordination point for substrate. D200 acts as the Proton donor in catalysis.

The protein belongs to the glycosyl hydrolase 27 family.

The catalysed reaction is Hydrolysis of terminal, non-reducing alpha-D-galactose residues in alpha-D-galactosides, including galactose oligosaccharides, galactomannans and galactolipids.. Its function is as follows. Preferentially cleaves alpha-1,3 and alpha-1,4 glycoside linkages. Involved in the hydrolysis of the galactomannan, it splits alpha-linked galactose moieties. It is particularly suitable for the hydrolysis of guar gum to a gum with improved gelling properties. Can cleave terminal alpha-1,3-linked galactose residues responsible for blood group B specificity from the surface of erythrocytes thereby converting these cells serologically to group O. In Coffea arabica (Arabian coffee), this protein is Alpha-galactosidase.